Consider the following 557-residue polypeptide: Dihydroxy-acid dehydratase (557 aa).

Cysteine 50 lines the [2Fe-2S] cluster pocket. Position 82 (aspartate 82) interacts with Mg(2+). Cysteine 123 is a binding site for [2Fe-2S] cluster. The Mg(2+) site is built by aspartate 124 and lysine 125. Lysine 125 bears the N6-carboxylysine mark. Cysteine 195 lines the [2Fe-2S] cluster pocket. Glutamate 447 provides a ligand contact to Mg(2+). The Proton acceptor role is filled by serine 473.

It belongs to the IlvD/Edd family. As to quaternary structure, homodimer. The cofactor is [2Fe-2S] cluster. It depends on Mg(2+) as a cofactor.

It catalyses the reaction (2R)-2,3-dihydroxy-3-methylbutanoate = 3-methyl-2-oxobutanoate + H2O. The catalysed reaction is (2R,3R)-2,3-dihydroxy-3-methylpentanoate = (S)-3-methyl-2-oxopentanoate + H2O. Its pathway is amino-acid biosynthesis; L-isoleucine biosynthesis; L-isoleucine from 2-oxobutanoate: step 3/4. The protein operates within amino-acid biosynthesis; L-valine biosynthesis; L-valine from pyruvate: step 3/4. Its function is as follows. Functions in the biosynthesis of branched-chain amino acids. Catalyzes the dehydration of (2R,3R)-2,3-dihydroxy-3-methylpentanoate (2,3-dihydroxy-3-methylvalerate) into 2-oxo-3-methylpentanoate (2-oxo-3-methylvalerate) and of (2R)-2,3-dihydroxy-3-methylbutanoate (2,3-dihydroxyisovalerate) into 2-oxo-3-methylbutanoate (2-oxoisovalerate), the penultimate precursor to L-isoleucine and L-valine, respectively. The protein is Dihydroxy-acid dehydratase of Metallosphaera sedula (strain ATCC 51363 / DSM 5348 / JCM 9185 / NBRC 15509 / TH2).